Consider the following 282-residue polypeptide: NADPH-dependent 7-cyano-7-deazaguanine reductase (282 aa).

Position 88–90 (88–90 (IES)) interacts with substrate. Position 90 to 91 (90 to 91 (SK)) interacts with NADPH. Cys-190 functions as the Thioimide intermediate in the catalytic mechanism. Catalysis depends on Asp-197, which acts as the Proton donor. 229-230 (HE) lines the substrate pocket. 258-259 (RG) serves as a coordination point for NADPH.

The protein belongs to the GTP cyclohydrolase I family. QueF type 2 subfamily. Homodimer.

It is found in the cytoplasm. It carries out the reaction 7-aminomethyl-7-carbaguanine + 2 NADP(+) = 7-cyano-7-deazaguanine + 2 NADPH + 3 H(+). It functions in the pathway tRNA modification; tRNA-queuosine biosynthesis. In terms of biological role, catalyzes the NADPH-dependent reduction of 7-cyano-7-deazaguanine (preQ0) to 7-aminomethyl-7-deazaguanine (preQ1). This Escherichia coli O9:H4 (strain HS) protein is NADPH-dependent 7-cyano-7-deazaguanine reductase.